The following is a 166-amino-acid chain: uncharacterized protein (166 aa).

This is an uncharacterized protein from Acidianus hospitalis (AFV-1).